The following is a 116-amino-acid chain: uncharacterized protein (116 aa).

A helical transmembrane segment spans residues 20 to 42 (YLNKYYSVITYFLAFLTKFAILL). The segment at 95–116 (IEFQSKSSPVPPASESNKGINE) is disordered.

It is found in the membrane. This is an uncharacterized protein from Saccharomyces cerevisiae (strain ATCC 204508 / S288c) (Baker's yeast).